Reading from the N-terminus, the 264-residue chain is Thymidylate synthase (264 aa).

R21 contacts dUMP. (6R)-5,10-methylene-5,6,7,8-tetrahydrofolate is bound at residue H51. 126–127 lines the dUMP pocket; that stretch reads RR. C146 acts as the Nucleophile in catalysis. DUMP-binding positions include 166-169, N177, and 207-209; these read RSAD and HLY. Residue D169 participates in (6R)-5,10-methylene-5,6,7,8-tetrahydrofolate binding. (6R)-5,10-methylene-5,6,7,8-tetrahydrofolate is bound at residue A263.

It belongs to the thymidylate synthase family. Bacterial-type ThyA subfamily. In terms of assembly, homodimer.

It localises to the cytoplasm. The enzyme catalyses dUMP + (6R)-5,10-methylene-5,6,7,8-tetrahydrofolate = 7,8-dihydrofolate + dTMP. It participates in pyrimidine metabolism; dTTP biosynthesis. Functionally, catalyzes the reductive methylation of 2'-deoxyuridine-5'-monophosphate (dUMP) to 2'-deoxythymidine-5'-monophosphate (dTMP) while utilizing 5,10-methylenetetrahydrofolate (mTHF) as the methyl donor and reductant in the reaction, yielding dihydrofolate (DHF) as a by-product. This enzymatic reaction provides an intracellular de novo source of dTMP, an essential precursor for DNA biosynthesis. This chain is Thymidylate synthase, found in Nitrosomonas europaea (strain ATCC 19718 / CIP 103999 / KCTC 2705 / NBRC 14298).